A 99-amino-acid polypeptide reads, in one-letter code: UPF0751 protein BAMEG_A0107 (99 aa).

It belongs to the UPF0751 family.

The protein is UPF0751 protein BAMEG_A0107 of Bacillus anthracis (strain CDC 684 / NRRL 3495).